The following is a 1035-amino-acid chain: FACT complex subunit SPT16 (1035 aa).

Residues 432-500 (FLKKEDEEEE…AKRRLTEQKG (69 aa)) are a coiled coil. Disordered stretches follow at residues 491 to 520 (AKRR…ASQV) and 920 to 1035 (EQGG…KRKK). A compositionally biased stretch (polar residues) spans 499–519 (KGGQQTMKARKSNVSYKNASQ). Over residues 929 to 985 (PDGEGSDAAEGDSESELDDETFNPSEDEEEEEEDSDEDYSDETEDSVDSEESADSEE) the composition is skewed to acidic residues. Residues 986-1006 (ESGKDWDELEEEARKADRESL) show a composition bias toward basic and acidic residues.

This sequence belongs to the peptidase M24 family. SPT16 subfamily. In terms of assembly, component of the FACT complex (also called the DUF complex), a stable heterodimer of ssrp1 and supt16h. May also be a component of a ck2-spt16-ssrp1 complex composed of ssrp1, supt16h, csnk2a1, csnk2a2 and csnk2b. The FACT complex may also interact with vcp.

It localises to the nucleus. The protein localises to the chromosome. Functionally, component of the FACT complex, a general chromatin factor that acts to reorganize nucleosomes. The FACT complex is involved in multiple processes that require DNA as a template such as mRNA elongation, DNA replication and DNA repair. During transcription elongation the FACT complex acts as a histone chaperone that both destabilizes and restores nucleosomal structure. It facilitates the passage of RNA polymerase II and transcription by promoting the dissociation of one histone H2A-H2B dimer from the nucleosome, then subsequently promotes the reestablishment of the nucleosome following the passage of RNA polymerase II. This is FACT complex subunit SPT16 (supt16h) from Xenopus laevis (African clawed frog).